The chain runs to 747 residues: Elongation factor G, mitochondrial (747 aa).

The transit peptide at 1–16 directs the protein to the mitochondrion; it reads MSLIMRVLNGNLSLRL. Residues 42-319 form the tr-type G domain; sequence ERIRNIGISA…AIIDYLPNPG (278 aa). Residues 51 to 58, 118 to 122, and 172 to 175 each bind GTP; these read AHIDSGKT, DTPGH, and NKLD.

The protein belongs to the TRAFAC class translation factor GTPase superfamily. Classic translation factor GTPase family. EF-G/EF-2 subfamily.

It is found in the mitochondrion. It functions in the pathway protein biosynthesis; polypeptide chain elongation. Its function is as follows. Mitochondrial GTPase that catalyzes the GTP-dependent ribosomal translocation step during translation elongation. During this step, the ribosome changes from the pre-translocational (PRE) to the post-translocational (POST) state as the newly formed A-site-bound peptidyl-tRNA and P-site-bound deacylated tRNA move to the P and E sites, respectively. Catalyzes the coordinated movement of the two tRNA molecules, the mRNA and conformational changes in the ribosome. Essential during development as it acts as a retrograde signal from mitochondria to the nucleus to slow down cell proliferation if mitochondrial energy output is low. The polypeptide is Elongation factor G, mitochondrial (Drosophila grimshawi (Hawaiian fruit fly)).